Here is a 388-residue protein sequence, read N- to C-terminus: Phosphopentomutase (388 aa).

Positions 10, 282, 287, 323, 324, and 335 each coordinate Mn(2+).

This sequence belongs to the phosphopentomutase family. The cofactor is Mn(2+).

It localises to the cytoplasm. The catalysed reaction is 2-deoxy-alpha-D-ribose 1-phosphate = 2-deoxy-D-ribose 5-phosphate. The enzyme catalyses alpha-D-ribose 1-phosphate = D-ribose 5-phosphate. It participates in carbohydrate degradation; 2-deoxy-D-ribose 1-phosphate degradation; D-glyceraldehyde 3-phosphate and acetaldehyde from 2-deoxy-alpha-D-ribose 1-phosphate: step 1/2. Isomerase that catalyzes the conversion of deoxy-ribose 1-phosphate (dRib-1-P) and ribose 1-phosphate (Rib-1-P) to deoxy-ribose 5-phosphate (dRib-5-P) and ribose 5-phosphate (Rib-5-P), respectively. The chain is Phosphopentomutase from Carboxydothermus hydrogenoformans (strain ATCC BAA-161 / DSM 6008 / Z-2901).